The chain runs to 209 residues: Peroxiredoxin (209 aa).

A Thioredoxin domain is found at 2-156; that stretch reads PLIGDKFPEM…IVRMIRAFRV (155 aa). Residue Cys44 is the Cysteine sulfenic acid (-SOH) intermediate of the active site. Arg119 is a binding site for substrate. Cys198 and Cys204 are oxidised to a cystine.

Belongs to the peroxiredoxin family. Prx6 subfamily. In terms of assembly, homodecamer. Pentamer of dimers that assemble into a ring structure.

The protein resides in the cytoplasm. The catalysed reaction is a hydroperoxide + [thioredoxin]-dithiol = an alcohol + [thioredoxin]-disulfide + H2O. Thiol-specific peroxidase that catalyzes the reduction of hydrogen peroxide and organic hydroperoxides to water and alcohols, respectively. Plays a role in cell protection against oxidative stress by detoxifying peroxides. In Methanothermobacter thermautotrophicus (strain ATCC 29096 / DSM 1053 / JCM 10044 / NBRC 100330 / Delta H) (Methanobacterium thermoautotrophicum), this protein is Peroxiredoxin.